The primary structure comprises 347 residues: MSSETKSEFGTKSAWLYNRTGKPKDVLYLEKGLHIPNPAELGPYDVLVEVVATSINPLDYKLMNTYQMIAKALFKLPNIPGYDFAGRVLAVGSEVKEFSATQRVWGCQSFPRAGRQGGSCATHIVTGDKDVWHLPDGVSFNEGAGFGIAGLTAWEVLVRQMKVKPGTKLVIEGASGGVGTFAVALAKALECEVTTISSTENLDLCKSLGATHTLDYKKDNLVERLADLGPYDFVFDCVNDNVLYRASSKFVKPDGAFFGIGGDITLSYVGSRLSRTLRPRVLGGSSHSYYNILLHVDQEMLRDFVDFVMKHNIKTVIDSVYDFEDTVEAFNRLMTHRCKGKVIIKTD.

It belongs to the zinc-containing alcohol dehydrogenase family. Quinone oxidoreductase subfamily.

Its subcellular location is the golgi apparatus. The protein resides in the endoplasmic reticulum. The protein is Zinc-type alcohol dehydrogenase-like protein C16A3.02c of Schizosaccharomyces pombe (strain 972 / ATCC 24843) (Fission yeast).